A 430-amino-acid polypeptide reads, in one-letter code: Histidinol dehydrogenase (430 aa).

NAD(+) contacts are provided by Tyr130, Gln191, and Asn214. 3 residues coordinate substrate: Ser237, Gln259, and His262. Residues Gln259 and His262 each coordinate Zn(2+). Catalysis depends on proton acceptor residues Glu327 and His328. The substrate site is built by His328, Asp361, Glu415, and His420. Asp361 contributes to the Zn(2+) binding site. Position 420 (His420) interacts with Zn(2+).

This sequence belongs to the histidinol dehydrogenase family. Requires Zn(2+) as cofactor.

The enzyme catalyses L-histidinol + 2 NAD(+) + H2O = L-histidine + 2 NADH + 3 H(+). The protein operates within amino-acid biosynthesis; L-histidine biosynthesis; L-histidine from 5-phospho-alpha-D-ribose 1-diphosphate: step 9/9. Its function is as follows. Catalyzes the sequential NAD-dependent oxidations of L-histidinol to L-histidinaldehyde and then to L-histidine. In Brucella suis biovar 1 (strain 1330), this protein is Histidinol dehydrogenase.